Here is a 164-residue protein sequence, read N- to C-terminus: Endoribonuclease YbeY (164 aa).

Zn(2+) is bound by residues histidine 111, histidine 115, and histidine 121. The disordered stretch occupies residues 142–164; sequence GYPDPYADDETETSPTVTTKDSE. Over residues 154–164 the composition is skewed to polar residues; sequence TSPTVTTKDSE.

The protein belongs to the endoribonuclease YbeY family. Zn(2+) serves as cofactor.

It localises to the cytoplasm. Functionally, single strand-specific metallo-endoribonuclease involved in late-stage 70S ribosome quality control and in maturation of the 3' terminus of the 16S rRNA. This is Endoribonuclease YbeY from Pseudomonas fluorescens (strain Pf0-1).